We begin with the raw amino-acid sequence, 436 residues long: Repulsive guidance molecule B (436 aa).

Positions M1–A48 are cleaved as a signal peptide. An N-linked (GlcNAc...) asparagine glycan is attached at N123. Intrachain disulfides connect C142–C229 and C166–C315. N-linked (GlcNAc...) asparagine glycosylation occurs at N386. The GPI-anchor amidated cysteine moiety is linked to residue C415. Residues G416–L436 constitute a propeptide, removed in mature form.

The protein belongs to the repulsive guidance molecule (RGM) family. In terms of assembly, homooligomer. Interacts with DRGX. Interacts with BMP2 and BMP4. Interacts with the BMP type I receptors ACVR1, BMPR1A and BMPR1B and with the BMP type II receptor ACVR2B. The functional complex with its receptor NEO1/neogenin appears to be a heterotetramer with a 2:2 stoichiometry, RGM molecules acting as staples that bring two NEO1 receptors together without interacting themselves, this arrangement leads to activation of downstream signaling via RhoA. In terms of processing, GPI-anchored. Post-translationally, autocatalytically cleaved at low pH; the two chains remain linked via two disulfide bonds. In terms of tissue distribution, detected in neonatal and adult dorsal root ganglion sensory neurons, spinal cord, and brain (at protein level). Also expressed at high levels in retinal ganglion cells of developing mouse, extending to the optic nerve (at protein level). Expressed in testis, epididymis, ovary, uterus, and pituitary.

It is found in the cell membrane. It localises to the membrane raft. In terms of biological role, member of the repulsive guidance molecule (RGM) family that contributes to the patterning of the developing nervous system. Acts as a bone morphogenetic protein (BMP) coreceptor that potentiates BMP signaling. Promotes neuronal adhesion. May inhibit neurite outgrowth. This chain is Repulsive guidance molecule B, found in Mus musculus (Mouse).